An 840-amino-acid polypeptide reads, in one-letter code: Leucine--tRNA ligase (840 aa).

The 'HIGH' region signature appears at 44–55 (PYPSANGLHVGH). A 'KMSKS' region motif is present at residues 617 to 621 (KMSKS). Lys-620 lines the ATP pocket.

The protein belongs to the class-I aminoacyl-tRNA synthetase family.

The protein resides in the cytoplasm. The enzyme catalyses tRNA(Leu) + L-leucine + ATP = L-leucyl-tRNA(Leu) + AMP + diphosphate. In Borreliella burgdorferi (strain ZS7) (Borrelia burgdorferi), this protein is Leucine--tRNA ligase.